A 377-amino-acid polypeptide reads, in one-letter code: Palmitoyltransferase ZDHHC16 (377 aa).

The Cytoplasmic segment spans residues 1–77; it reads MRGQRSLLLG…VYWLVDNVIR (77 aa). Residues 78-98 traverse the membrane as a helical segment; sequence WFGVVFVVLVIVLTGSIVAIA. Topologically, residues 99-116 are lumenal; it reads YLCVLPLILRTYSVPRLC. A helical membrane pass occupies residues 117–137; the sequence is WHFFYSHWNLILIVFHYYQAI. The Cytoplasmic portion of the chain corresponds to 138–198; that stretch reads TTPPGYPPQG…NNCVGHYNHR (61 aa). A DHHC domain is found at 155-205; it reads SICKKCIYPKPARTHHCSICNRCVLKMDHHCPWLNNCVGHYNHRYFFSFCF. Catalysis depends on Cys185, which acts as the S-palmitoyl cysteine intermediate. A helical membrane pass occupies residues 199-219; sequence YFFSFCFFMTLGCVYCSYGSW. Over 220 to 266 the chain is Lumenal; it reads DLFREAYAAIEKMKQLDKNKLQAVANQTYHQTPPPIFSFRERMTHKS. The chain crosses the membrane as a helical span at residues 267–287; that stretch reads LVYLWFLCSSVALALGALTVW. Topologically, residues 288–377 are cytoplasmic; that stretch reads HAVLISRGET…TAHSASVMAV (90 aa).

This sequence belongs to the DHHC palmitoyltransferase family. Interacts with ABL1. Interacts with COPS5/JAB1.

It localises to the endoplasmic reticulum membrane. It catalyses the reaction L-cysteinyl-[protein] + hexadecanoyl-CoA = S-hexadecanoyl-L-cysteinyl-[protein] + CoA. Its function is as follows. Palmitoyl acyltransferase that mediates palmitoylation of proteins such as PLN and ZDHHC6. Required during embryonic heart development and cardiac function, possibly by mediating palmitoylation of PLN, thereby affecting PLN phosphorylation and homooligomerization. Also required for eye development. Palmitoylates ZDHHC6, affecting the quaternary assembly of ZDHHC6, its localization, stability and function. May play a role in DNA damage response. May be involved in apoptosis regulation. Involved in the proliferation of neural stem cells by regulating the FGF/ERK pathway. In Macaca fascicularis (Crab-eating macaque), this protein is Palmitoyltransferase ZDHHC16.